Reading from the N-terminus, the 351-residue chain is Phosphate acyltransferase (351 aa).

The protein belongs to the PlsX family. As to quaternary structure, homodimer. Probably interacts with PlsY.

Its subcellular location is the cytoplasm. The catalysed reaction is a fatty acyl-[ACP] + phosphate = an acyl phosphate + holo-[ACP]. It participates in lipid metabolism; phospholipid metabolism. Functionally, catalyzes the reversible formation of acyl-phosphate (acyl-PO(4)) from acyl-[acyl-carrier-protein] (acyl-ACP). This enzyme utilizes acyl-ACP as fatty acyl donor, but not acyl-CoA. In Gloeothece citriformis (strain PCC 7424) (Cyanothece sp. (strain PCC 7424)), this protein is Phosphate acyltransferase.